Reading from the N-terminus, the 95-residue chain is Aspartyl/glutamyl-tRNA(Asn/Gln) amidotransferase subunit C (95 aa).

The protein belongs to the GatC family. In terms of assembly, heterotrimer of A, B and C subunits.

It catalyses the reaction L-glutamyl-tRNA(Gln) + L-glutamine + ATP + H2O = L-glutaminyl-tRNA(Gln) + L-glutamate + ADP + phosphate + H(+). The enzyme catalyses L-aspartyl-tRNA(Asn) + L-glutamine + ATP + H2O = L-asparaginyl-tRNA(Asn) + L-glutamate + ADP + phosphate + 2 H(+). Functionally, allows the formation of correctly charged Asn-tRNA(Asn) or Gln-tRNA(Gln) through the transamidation of misacylated Asp-tRNA(Asn) or Glu-tRNA(Gln) in organisms which lack either or both of asparaginyl-tRNA or glutaminyl-tRNA synthetases. The reaction takes place in the presence of glutamine and ATP through an activated phospho-Asp-tRNA(Asn) or phospho-Glu-tRNA(Gln). The sequence is that of Aspartyl/glutamyl-tRNA(Asn/Gln) amidotransferase subunit C from Rhizobium etli (strain CIAT 652).